Consider the following 119-residue polypeptide: Large ribosomal subunit protein uL24 (119 aa).

Belongs to the universal ribosomal protein uL24 family. Part of the 50S ribosomal subunit.

One of two assembly initiator proteins, it binds directly to the 5'-end of the 23S rRNA, where it nucleates assembly of the 50S subunit. Functionally, located at the polypeptide exit tunnel on the outside of the subunit. The sequence is that of Large ribosomal subunit protein uL24 from Haloquadratum walsbyi (strain DSM 16790 / HBSQ001).